Consider the following 452-residue polypeptide: UDP-N-acetylmuramoylalanine--D-glutamate ligase (452 aa).

119-125 contacts ATP; that stretch reads GSNGKTT.

This sequence belongs to the MurCDEF family.

The protein resides in the cytoplasm. The catalysed reaction is UDP-N-acetyl-alpha-D-muramoyl-L-alanine + D-glutamate + ATP = UDP-N-acetyl-alpha-D-muramoyl-L-alanyl-D-glutamate + ADP + phosphate + H(+). The protein operates within cell wall biogenesis; peptidoglycan biosynthesis. Cell wall formation. Catalyzes the addition of glutamate to the nucleotide precursor UDP-N-acetylmuramoyl-L-alanine (UMA). The chain is UDP-N-acetylmuramoylalanine--D-glutamate ligase from Streptococcus pyogenes serotype M4 (strain MGAS10750).